Reading from the N-terminus, the 296-residue chain is Chronophin (296 aa).

D25 acts as the Nucleophile in catalysis. Positions 25 and 27 each coordinate Mg(2+). Catalysis depends on D27, which acts as the Proton donor. Residues 58–60 (SNN), H182, and K213 contribute to the substrate site. Residue D238 participates in Mg(2+) binding.

This sequence belongs to the HAD-like hydrolase superfamily. In terms of assembly, homodimer. Mg(2+) serves as cofactor. Ubiquitously expressed (at protein level). Highly expressed in all the regions of central nerve system except the spinal cord. Also expressed at high level in liver and testis. In fetus, it is weakly expressed in all organs except brain.

It localises to the cytoplasm. Its subcellular location is the cytosol. The protein resides in the cytoskeleton. It is found in the cell projection. The protein localises to the ruffle membrane. It localises to the lamellipodium membrane. Its subcellular location is the cell membrane. It catalyses the reaction pyridoxal 5'-phosphate + H2O = pyridoxal + phosphate. The enzyme catalyses pyridoxine 5'-phosphate + H2O = pyridoxine + phosphate. It carries out the reaction pyridoxamine + phosphate = pyridoxamine 5'-phosphate + H2O. The catalysed reaction is O-phospho-L-seryl-[protein] + H2O = L-seryl-[protein] + phosphate. Its activity is regulated as follows. Inhibited by NaF, Zn(2+), Ca(2+), Mn(2+) and EDTA. Functionally, functions as a pyridoxal phosphate (PLP) phosphatase, which also catalyzes the dephosphorylation of pyridoxine 5'-phosphate (PNP) and pyridoxamine 5'-phosphate (PMP), with order of substrate preference PLP &gt; PNP &gt; PMP and therefore plays a role in vitamin B6 metabolism. Also functions as a protein serine phosphatase that specifically dephosphorylates 'Ser-3' in proteins of the actin-depolymerizing factor (ADF)/cofilin family like CFL1 and DSTN. Thereby, regulates cofilin-dependent actin cytoskeleton reorganization, being required for normal progress through mitosis and normal cytokinesis. Does not dephosphorylate phosphothreonines in LIMK1. Does not dephosphorylate peptides containing phosphotyrosine. This chain is Chronophin, found in Homo sapiens (Human).